Reading from the N-terminus, the 591-residue chain is V-type ATP synthase alpha chain (591 aa).

Residue 233–240 (GPFGAGKT) participates in ATP binding.

This sequence belongs to the ATPase alpha/beta chains family.

The catalysed reaction is ATP + H2O + 4 H(+)(in) = ADP + phosphate + 5 H(+)(out). Functionally, produces ATP from ADP in the presence of a proton gradient across the membrane. The V-type alpha chain is a catalytic subunit. This chain is V-type ATP synthase alpha chain, found in Streptococcus pneumoniae (strain Hungary19A-6).